We begin with the raw amino-acid sequence, 361 residues long: UDP-D-xylose:L-fucose alpha-1,3-D-xylosyltransferase 1 (361 aa).

Residues 1 to 21 (MEQKQHILKQSTFSSSPSSYS) are disordered. Residues 1 to 34 (MEQKQHILKQSTFSSSPSSYSSISDRPISLLSRN) lie on the Cytoplasmic side of the membrane. The span at 11–21 (STFSSSPSSYS) shows a compositional bias: low complexity. Residues 35–55 (GLLLLLLALVLLLGVLLPWPG) traverse the membrane as a helical; Signal-anchor for type II membrane protein segment. Residues 56-361 (SPLFLFPNRL…ALESPLGKLE (306 aa)) are Lumenal-facing. N-linked (GlcNAc...) asparagine glycosylation is found at Asn92 and Asn167. The DXD motif signature appears at 190-192 (DVD). Residues Asn222 and Asn286 are each glycosylated (N-linked (GlcNAc...) asparagine).

Belongs to the glycosyltransferase 77 family. The cofactor is Mn(2+). It depends on Mg(2+) as a cofactor. Post-translationally, glycosylated. In terms of tissue distribution, expressed in roots, rosette leaves, cauline leaves and stems.

The protein localises to the golgi apparatus membrane. Functionally, catalyzes the transfer of D-xylose from UDP-alpha-D-xylose onto L-fucose. Probably involved in the biosynthesis of rhamnogalacturonan II (RG-II) through xylosylation of the internal fucose moiety of the A-chain of RG-II, a structurally complex pectic polysaccharide of the primary cell wall. RG-II is essential for the cell wall integrity of rapidly growing tissues such as roots and pollen tube growth and elongation. The sequence is that of UDP-D-xylose:L-fucose alpha-1,3-D-xylosyltransferase 1 from Arabidopsis thaliana (Mouse-ear cress).